The primary structure comprises 258 residues: Acetylglutamate kinase (258 aa).

Substrate is bound by residues 44–45 (GG), Arg66, and Asn158. ATP contacts are provided by residues 181 to 186 (DVSGIL) and 209 to 211 (IIT).

This sequence belongs to the acetylglutamate kinase family. ArgB subfamily. In terms of assembly, homodimer.

Its subcellular location is the cytoplasm. The catalysed reaction is N-acetyl-L-glutamate + ATP = N-acetyl-L-glutamyl 5-phosphate + ADP. It functions in the pathway amino-acid biosynthesis; L-arginine biosynthesis; N(2)-acetyl-L-ornithine from L-glutamate: step 2/4. In terms of biological role, catalyzes the ATP-dependent phosphorylation of N-acetyl-L-glutamate. In Citrobacter koseri (strain ATCC BAA-895 / CDC 4225-83 / SGSC4696), this protein is Acetylglutamate kinase.